We begin with the raw amino-acid sequence, 255 residues long: Small ribosomal subunit protein uS2 (255 aa).

Belongs to the universal ribosomal protein uS2 family.

The polypeptide is Small ribosomal subunit protein uS2 (Streptococcus thermophilus (strain CNRZ 1066)).